The sequence spans 457 residues: Tryptophan aminotransferase-related protein 3 (457 aa).

Residues 6–26 (LLIAGSIILNLVFTIHILYNN) traverse the membrane as a helical segment. Pyridoxal 5'-phosphate-binding positions include tyrosine 123, 163-164 (AT), asparagine 237, 257-260 (DYAY), 280-283 (SLSK), and arginine 291. At lysine 283 the chain carries N6-(pyridoxal phosphate)lysine.

Belongs to the alliinase family. The cofactor is pyridoxal 5'-phosphate.

It localises to the membrane. Probable aminotransferase. The sequence is that of Tryptophan aminotransferase-related protein 3 (TAR3) from Arabidopsis thaliana (Mouse-ear cress).